Here is an 86-residue protein sequence, read N- to C-terminus: Small ribosomal subunit protein uS15c (86 aa).

Belongs to the universal ribosomal protein uS15 family. In terms of assembly, part of the 30S ribosomal subunit.

Its subcellular location is the plastid. The polypeptide is Small ribosomal subunit protein uS15c (rps15) (Cuscuta gronovii (Common dodder)).